Here is a 314-residue protein sequence, read N- to C-terminus: L-lactate dehydrogenase 1 (314 aa).

NAD(+) contacts are provided by residues V16, D37, K42, Y68, and 82–83 (GL). Residues Q85, R91, and 123 to 126 (NPVD) contribute to the substrate site. Residues 121 to 123 (ATN) and S146 each bind NAD(+). Substrate is bound at residue 151 to 154 (DSAR). Positions 156 and 171 each coordinate beta-D-fructose 1,6-bisphosphate. Catalysis depends on H178, which acts as the Proton acceptor. Y223 carries the post-translational modification Phosphotyrosine. T232 contacts substrate.

This sequence belongs to the LDH/MDH superfamily. LDH family. In terms of assembly, homotetramer.

It is found in the cytoplasm. It catalyses the reaction (S)-lactate + NAD(+) = pyruvate + NADH + H(+). The protein operates within fermentation; pyruvate fermentation to lactate; (S)-lactate from pyruvate: step 1/1. Its activity is regulated as follows. Allosterically activated by fructose 1,6-bisphosphate (FBP). Functionally, catalyzes the conversion of lactate to pyruvate. The chain is L-lactate dehydrogenase 1 from Bacillus cereus (strain ATCC 14579 / DSM 31 / CCUG 7414 / JCM 2152 / NBRC 15305 / NCIMB 9373 / NCTC 2599 / NRRL B-3711).